A 140-amino-acid chain; its full sequence is Nucleoside diphosphate kinase (140 aa).

Residues lysine 11, phenylalanine 59, arginine 87, threonine 93, arginine 104, and asparagine 114 each contribute to the ATP site. The active-site Pros-phosphohistidine intermediate is histidine 117.

This sequence belongs to the NDK family. As to quaternary structure, homotetramer. Requires Mg(2+) as cofactor.

The protein localises to the cytoplasm. It carries out the reaction a 2'-deoxyribonucleoside 5'-diphosphate + ATP = a 2'-deoxyribonucleoside 5'-triphosphate + ADP. The catalysed reaction is a ribonucleoside 5'-diphosphate + ATP = a ribonucleoside 5'-triphosphate + ADP. Functionally, major role in the synthesis of nucleoside triphosphates other than ATP. The ATP gamma phosphate is transferred to the NDP beta phosphate via a ping-pong mechanism, using a phosphorylated active-site intermediate. This Francisella tularensis subsp. mediasiatica (strain FSC147) protein is Nucleoside diphosphate kinase.